A 95-amino-acid chain; its full sequence is Acyl carrier protein (95 aa).

One can recognise a Carrier domain in the interval 4–79 (KEIFERIEQV…HVMELTLDLV (76 aa)). Ser39 is subject to O-(pantetheine 4'-phosphoryl)serine.

The protein belongs to the acyl carrier protein (ACP) family. 4'-phosphopantetheine is transferred from CoA to a specific serine of apo-ACP by AcpS. This modification is essential for activity because fatty acids are bound in thioester linkage to the sulfhydryl of the prosthetic group.

It is found in the cytoplasm. The protein operates within lipid metabolism; fatty acid biosynthesis. Its function is as follows. Carrier of the growing fatty acid chain in fatty acid biosynthesis. The polypeptide is Acyl carrier protein (Saccharopolyspora erythraea (strain ATCC 11635 / DSM 40517 / JCM 4748 / NBRC 13426 / NCIMB 8594 / NRRL 2338)).